Reading from the N-terminus, the 283-residue chain is Non-selective voltage-gated ion channel VDAC1 (283 aa).

The residue at position 2 (Ala-2) is an N-acetylalanine. Residue Lys-12 participates in ATP binding. Lys-12 participates in a covalent cross-link: Glycyl lysine isopeptide (Lys-Gly) (interchain with G-Cter in ubiquitin). Ser-13 bears the Phosphoserine mark. Thr-19 is modified (phosphothreonine). Lys-20 is an ATP binding site. Lys-20 carries the N6-acetyllysine; alternate modification. The residue at position 20 (Lys-20) is an N6-succinyllysine; alternate. Lys-20 participates in a covalent cross-link: Glycyl lysine isopeptide (Lys-Gly) (interchain with G-Cter in ubiquitin); alternate. 2 consecutive transmembrane segments (beta stranded) span residues 26–35 (LIKLDLKTKS) and 39–47 (LEFTSSGSA). Residues Lys-53 and Lys-61 each participate in a glycyl lysine isopeptide (Lys-Gly) (interchain with G-Cter in ubiquitin) cross-link. The chain crosses the membrane as a beta stranded span at residues 54-64 (VNGSLETKYRW). At Tyr-67 the chain carries Phosphotyrosine. Transmembrane regions (beta stranded) follow at residues 69–76 (LTFTEKWN), 80–89 (TLGTEITVED), and 95–104 (LKLTFDSSFS). Position 107 is a phosphothreonine (Thr-107). The residue at position 109 (Lys-109) is an N6-acetyllysine; alternate. Residue Lys-109 forms a Glycyl lysine isopeptide (Lys-Gly) (interchain with G-Cter in ubiquitin); alternate linkage. Residue Lys-110 forms a Glycyl lysine isopeptide (Lys-Gly) (interchain with G-Cter in ubiquitin) linkage. A run of 4 beta stranded transmembrane segments spans residues 111–120 (NAKIKTGYKR), 123–130 (INLGCDVD), 137–145 (SIRGALVLG), and 150–158 (LAGYQMNFE). Ser-137 carries the post-translational modification Phosphoserine. Lys-161 participates in a covalent cross-link: Glycyl lysine isopeptide (Lys-Gly) (interchain with G-Cter in ubiquitin). 6 beta stranded membrane-spanning segments follow: residues 163–175 (RVTQ…GYKT), 178–185 (FQLHTNVN), 189–198 (EFGGSIYQKV), 202–211 (LETAVNLAWT), 218–227 (RFGIAAKYQV), and 231–238 (ACFSAKVN). Ser-193 carries the post-translational modification Phosphoserine; by NEK1. Residue Ser-240 is modified to Phosphoserine. An NAD(+)-binding site is contributed by 242–244 (LIG). Residues 242-251 (LIGLGYTQTL) traverse the membrane as a beta stranded segment. Position 252 is an N6-acetyllysine (Lys-252). A beta stranded transmembrane segment spans residues 254-263 (GIKLTLSALL). Residue 260–264 (SALLD) participates in NAD(+) binding. N6-acetyllysine; alternate is present on Lys-266. Lys-266 participates in a covalent cross-link: Glycyl lysine isopeptide (Lys-Gly) (interchain with G-Cter in ubiquitin); alternate. The chain crosses the membrane as a beta stranded span at residues 273-282 (HKLGLGLEFQ). A Glycyl lysine isopeptide (Lys-Gly) (interchain with G-Cter in ubiquitin) cross-link involves residue Lys-274.

This sequence belongs to the eukaryotic mitochondrial porin family. Homodimer and homotrimer; in response to cyclic AMP or calcium; oligomerization is required for scramblase activity. Component of the mitochondrial permeability transition pore complex (mPTPC), at least composed of SPG7, VDAC1 and PPIF. Interacts with SPG7, NIPSNAP2 and SLC25A30. Interacts with hexokinases including HK1. The HK1-VDAC1 complex interacts with ATF2. Interacts with BCL2L1. Interacts with BAK1. Interacts with RTL10/BOP (via BH3 domain). Interacts with amyloid-beta and APP; induces VDAC1 dephosphorylation. Interacts with TMEM41B. Interacts with BCAP31. Interacts with HSPA9; this interaction couples ITPR1 to VDAC1. Post-translationally, phosphorylation at Ser-193 by NEK1 promotes the closed conformational state preventing excessive mitochondrial membrane permeability and subsequent apoptotic cell death after injury. Phosphorylation by the AKT-GSK3B axis stabilizes the protein probably by preventing ubiquitin-mediated proteasomal degradation. Ubiquitinated. Undergoes monoubiquitination and polyubiquitination by PRKN; monoubiquitination at Lys-274 inhibits apoptosis, whereas polyubiquitination leads to its degradation and promotes mitophagy. Deubiquitinated by USP30. As to expression, widely expressed. High levels in heart and kidney with lower levels in brain and ascitic tumor. Very low levels in liver.

Its subcellular location is the mitochondrion outer membrane. It localises to the cell membrane. The protein localises to the membrane raft. The catalysed reaction is Ca(2+)(in) = Ca(2+)(out). It carries out the reaction Na(+)(in) = Na(+)(out). It catalyses the reaction chloride(in) = chloride(out). The enzyme catalyses Mg(2+)(in) = Mg(2+)(out). The catalysed reaction is K(+)(in) = K(+)(out). It carries out the reaction ATP(in) = ATP(out). It catalyses the reaction L-glutamate(out) = L-glutamate(in). The enzyme catalyses dopamine(out) = dopamine(in). The catalysed reaction is acetylcholine(in) = acetylcholine(out). It carries out the reaction Fe(III)-[cytochrome c](out) = Fe(III)-[cytochrome c](in). It catalyses the reaction a 1,2-diacyl-sn-glycero-3-phosphocholine(in) = a 1,2-diacyl-sn-glycero-3-phosphocholine(out). The enzyme catalyses a 1,2-diacyl-sn-glycero-3-phospho-L-serine(in) = a 1,2-diacyl-sn-glycero-3-phospho-L-serine(out). Inhibited by nitric oxide. Voltage-gated ion channel activity is inhibited by lanthanum(3+) and ruthenium red. Mitochondrial calcium transport is inhibited by lanthanum(3+), ruthenium red and Ru360. In terms of biological role, non-selective voltage-gated ion channel that mediates the transport of anions and cations through the mitochondrion outer membrane and plasma membrane. The channel at the outer mitochondrial membrane allows diffusion of small hydrophilic molecules; in the plasma membrane it is involved in cell volume regulation and apoptosis. It adopts an open conformation at low or zero membrane potential and a closed conformation at potentials above 30-40 mV. The open state has a weak anion selectivity whereas the closed state is cation-selective. Binds various signaling molecules, including the sphingolipid ceramide, the phospholipid phosphatidylcholine, and the sterols cholesterol and oxysterol. In depolarized mitochondria, acts downstream of PRKN and PINK1 to promote mitophagy or prevent apoptosis; polyubiquitination by PRKN promotes mitophagy, while monoubiquitination by PRKN decreases mitochondrial calcium influx which ultimately inhibits apoptosis. May participate in the formation of the permeability transition pore complex (PTPC) responsible for the release of mitochondrial products that triggers apoptosis. May mediate ATP export from cells. Part of a complex composed of HSPA9, ITPR1 and VDAC1 that regulates mitochondrial calcium-dependent apoptosis by facilitating calcium transport from the ER lumen to the mitochondria intermembrane space thus providing calcium for the downstream calcium channel MCU that directly releases it into mitochondria matrix. Its function is as follows. Catalyzes the scrambling of phospholipids across the outer mitochondrial membrane; the mechanism is unrelated to channel activity and is capable of translocating both anionic and zwitterionic phospholipids. The sequence is that of Non-selective voltage-gated ion channel VDAC1 from Rattus norvegicus (Rat).